The following is a 397-amino-acid chain: Elongation factor Tu (397 aa).

Residues 10 to 206 enclose the tr-type G domain; it reads KPHVNIGTIG…AVDQNIPEPQ (197 aa). The tract at residues 19-26 is G1; sequence GHIDHGKT. 19–26 serves as a coordination point for GTP; it reads GHIDHGKT. Thr26 contributes to the Mg(2+) binding site. The G2 stretch occupies residues 62–66; the sequence is GITIS. Residues 83 to 86 are G3; it reads DCPG. Residues 83–87 and 138–141 each bind GTP; these read DCPGH and NKSD. Positions 138–141 are G4; sequence NKSD. A G5 region spans residues 176–178; that stretch reads SAL.

Belongs to the TRAFAC class translation factor GTPase superfamily. Classic translation factor GTPase family. EF-Tu/EF-1A subfamily. In terms of assembly, monomer.

It localises to the cytoplasm. It carries out the reaction GTP + H2O = GDP + phosphate + H(+). Functionally, GTP hydrolase that promotes the GTP-dependent binding of aminoacyl-tRNA to the A-site of ribosomes during protein biosynthesis. This chain is Elongation factor Tu, found in Thermobifida fusca (strain YX).